The sequence spans 248 residues: Cytochrome c oxidase subunit 2 (248 aa).

Over 1–36 (MLFFNSILNDAPSSWALYFQDGASPSYLGVTHLNDY) the chain is Mitochondrial intermembrane. The chain crosses the membrane as a helical span at residues 37 to 57 (LMFYLTFIFIGVIYAICKAVI). The Mitochondrial matrix portion of the chain corresponds to 58–75 (EYNYNSHPIAAKYTTHGS). A helical membrane pass occupies residues 76-100 (IVEFIWTLIPALILILVALPSFKLL). Residues 101–248 (YLLDEVQKPS…DFLAWLEENS (148 aa)) are Mitochondrial intermembrane-facing. 6 residues coordinate Cu cation: histidine 182, cysteine 217, glutamate 219, cysteine 221, histidine 225, and methionine 228. A Mg(2+)-binding site is contributed by glutamate 219.

Belongs to the cytochrome c oxidase subunit 2 family. In terms of assembly, component of the cytochrome c oxidase (complex IV, CIV), a multisubunit enzyme composed of a catalytic core of 3 subunits and several supernumerary subunits. The complex exists as a monomer or a dimer and forms supercomplexes (SCs) in the inner mitochondrial membrane with ubiquinol-cytochrome c oxidoreductase (cytochrome b-c1 complex, complex III, CIII). Cu cation is required as a cofactor.

The protein resides in the mitochondrion inner membrane. It carries out the reaction 4 Fe(II)-[cytochrome c] + O2 + 8 H(+)(in) = 4 Fe(III)-[cytochrome c] + 2 H2O + 4 H(+)(out). In terms of biological role, component of the cytochrome c oxidase, the last enzyme in the mitochondrial electron transport chain which drives oxidative phosphorylation. The respiratory chain contains 3 multisubunit complexes succinate dehydrogenase (complex II, CII), ubiquinol-cytochrome c oxidoreductase (cytochrome b-c1 complex, complex III, CIII) and cytochrome c oxidase (complex IV, CIV), that cooperate to transfer electrons derived from NADH and succinate to molecular oxygen, creating an electrochemical gradient over the inner membrane that drives transmembrane transport and the ATP synthase. Cytochrome c oxidase is the component of the respiratory chain that catalyzes the reduction of oxygen to water. Electrons originating from reduced cytochrome c in the intermembrane space (IMS) are transferred via the dinuclear copper A center (CU(A)) of subunit 2 and heme A of subunit 1 to the active site in subunit 1, a binuclear center (BNC) formed by heme A3 and copper B (CU(B)). The BNC reduces molecular oxygen to 2 water molecules using 4 electrons from cytochrome c in the IMS and 4 protons from the mitochondrial matrix. This is Cytochrome c oxidase subunit 2 (cox2) from Schizosaccharomyces pombe (strain 972 / ATCC 24843) (Fission yeast).